Here is a 360-residue protein sequence, read N- to C-terminus: Peptide chain release factor 1 (360 aa).

An N5-methylglutamine modification is found at Q235. Positions 284 to 313 (AKRQQAEASTRRNLLGSGDRSDRNRTYNFP) are disordered.

Belongs to the prokaryotic/mitochondrial release factor family. Post-translationally, methylated by PrmC. Methylation increases the termination efficiency of RF1.

The protein localises to the cytoplasm. Peptide chain release factor 1 directs the termination of translation in response to the peptide chain termination codons UAG and UAA. In Salmonella schwarzengrund (strain CVM19633), this protein is Peptide chain release factor 1.